The following is a 259-amino-acid chain: Small ribosomal subunit protein eS1 (259 aa).

The protein belongs to the eukaryotic ribosomal protein eS1 family. In terms of assembly, component of the small ribosomal subunit. Mature ribosomes consist of a small (40S) and a large (60S) subunit. The 40S subunit contains about 33 different proteins and 1 molecule of RNA (18S). The 60S subunit contains about 49 different proteins and 3 molecules of RNA (25S, 5.8S and 5S).

It is found in the cytoplasm. The protein is Small ribosomal subunit protein eS1 of Monosiga brevicollis (Choanoflagellate).